Consider the following 153-residue polypeptide: Ribonuclease H (153 aa).

Residues 1-141 (MKLVEIFTDG…CDELAKAGAN (141 aa)) form the RNase H type-1 domain. Mg(2+) is bound by residues Asp9, Glu47, Asp69, and Asp133.

The protein belongs to the RNase H family. In terms of assembly, monomer. Requires Mg(2+) as cofactor.

Its subcellular location is the cytoplasm. It carries out the reaction Endonucleolytic cleavage to 5'-phosphomonoester.. Endonuclease that specifically degrades the RNA of RNA-DNA hybrids. The protein is Ribonuclease H of Actinobacillus pleuropneumoniae serotype 5b (strain L20).